Consider the following 65-residue polypeptide: Large ribosomal subunit protein uL29 (65 aa).

The protein belongs to the universal ribosomal protein uL29 family.

The polypeptide is Large ribosomal subunit protein uL29 (Coxiella burnetii (strain CbuK_Q154) (Coxiella burnetii (strain Q154))).